Reading from the N-terminus, the 542-residue chain is 1-aminocyclopropane-1-carboxylate synthase 6 (542 aa).

A disordered region spans residues 1 to 28; it reads MRRSGNGGAAKKKKKRSASAASERRPRA. Residue K379 is modified to N6-(pyridoxal phosphate)lysine.

It belongs to the class-I pyridoxal-phosphate-dependent aminotransferase family. The cofactor is pyridoxal 5'-phosphate. Expressed in leaves.

It localises to the plastid. Its subcellular location is the amyloplast membrane. The catalysed reaction is S-adenosyl-L-methionine = 1-aminocyclopropane-1-carboxylate + S-methyl-5'-thioadenosine + H(+). It participates in alkene biosynthesis; ethylene biosynthesis via S-adenosyl-L-methionine; ethylene from S-adenosyl-L-methionine: step 1/2. Catalyzes the formation of 1-aminocyclopropane-1-carboxylate, a direct precursor of ethylene in higher plants. Required for the regulation of starch grain size in endosperm. The sequence is that of 1-aminocyclopropane-1-carboxylate synthase 6 from Oryza sativa subsp. japonica (Rice).